The following is a 28-amino-acid chain: Chassatide C12 (28 aa).

Positions 1 to 28 (EYCGESCYLIPCFTPGCYCVSRQCVNKN) form a cross-link, cyclopeptide (Glu-Asn). 3 disulfide bridges follow: Cys3–Cys17, Cys7–Cys19, and Cys12–Cys24.

This is a cyclic peptide. As to expression, expressed in fruit, pedicel, leaf and stem but not in root (at protein level).

Probably participates in a plant defense mechanism. This chain is Chassatide C12, found in Chassalia chartacea (Chassalia curviflora).